We begin with the raw amino-acid sequence, 86 residues long: Muscarinic toxin-like protein (86 aa).

The first 21 residues, Met1–Thr21, serve as a signal peptide directing secretion. Disulfide bonds link Cys24/Cys45, Cys38/Cys62, Cys66/Cys78, and Cys79/Cys84.

It belongs to the three-finger toxin family. Short-chain subfamily. Orphan group VIII (haditoxin) sub-subfamily. Homodimer; non-covalently linked. As to expression, expressed by the venom gland.

It localises to the secreted. Its function is as follows. Antagonist of muscle and neuronal nicotinic acetylcholine receptors (nAChR) with highest affinity for neuronal alpha-7/CHRNA7 nAChRs. This chain is Muscarinic toxin-like protein, found in Bungarus multicinctus (Many-banded krait).